The chain runs to 406 residues: Bifunctional enzyme IspD/IspF (406 aa).

The tract at residues 1–247 (MSLIRVNGEA…AFFFNPAKDT (247 aa)) is 2-C-methyl-D-erythritol 4-phosphate cytidylyltransferase. The tract at residues 248–406 (FIGMGFDTHA…HVSMRYKQKL (159 aa)) is 2-C-methyl-D-erythritol 2,4-cyclodiphosphate synthase. Residues Asp-254 and His-256 each contribute to the a divalent metal cation site. 4-CDP-2-C-methyl-D-erythritol 2-phosphate-binding positions include 254–256 (DTH) and 280–281 (HS). His-288 lines the a divalent metal cation pocket. 4-CDP-2-C-methyl-D-erythritol 2-phosphate is bound by residues 302-304 (DIG), 307-311 (FPDND), 378-381 (TTME), Phe-385, and Lys-388.

This sequence in the N-terminal section; belongs to the IspD/TarI cytidylyltransferase family. IspD subfamily. The protein in the C-terminal section; belongs to the IspF family. Requires a divalent metal cation as cofactor.

The catalysed reaction is 2-C-methyl-D-erythritol 4-phosphate + CTP + H(+) = 4-CDP-2-C-methyl-D-erythritol + diphosphate. It catalyses the reaction 4-CDP-2-C-methyl-D-erythritol 2-phosphate = 2-C-methyl-D-erythritol 2,4-cyclic diphosphate + CMP. It functions in the pathway isoprenoid biosynthesis; isopentenyl diphosphate biosynthesis via DXP pathway; isopentenyl diphosphate from 1-deoxy-D-xylulose 5-phosphate: step 2/6. It participates in isoprenoid biosynthesis; isopentenyl diphosphate biosynthesis via DXP pathway; isopentenyl diphosphate from 1-deoxy-D-xylulose 5-phosphate: step 4/6. Bifunctional enzyme that catalyzes the formation of 4-diphosphocytidyl-2-C-methyl-D-erythritol from CTP and 2-C-methyl-D-erythritol 4-phosphate (MEP) (IspD), and catalyzes the conversion of 4-diphosphocytidyl-2-C-methyl-D-erythritol 2-phosphate (CDP-ME2P) to 2-C-methyl-D-erythritol 2,4-cyclodiphosphate (ME-CPP) with a corresponding release of cytidine 5-monophosphate (CMP) (IspF). This is Bifunctional enzyme IspD/IspF from Helicobacter pylori (strain G27).